The sequence spans 208 residues: MGISRDSAHKRRATGGKRKSLRKKRKFELGRPAANTKLGSGRVHKVRTRGGNTKLRALRLETGNFAWASEGVARKTRIADVVYNASNNELVRTKTLVKNSIVVIDATPFRQWYEAHYVLPLGRKRNPKHAQKEDENDVLTKKRSEKVMKKYLERQKYGKVEQALEDQFTSGRILACISSRPGQCGRSDGYILEGKELEFYLKKIKSKK.

A disordered region spans residues 1–23 (MGISRDSAHKRRATGGKRKSLRK). Basic residues predominate over residues 8–23 (AHKRRATGGKRKSLRK).

This sequence belongs to the eukaryotic ribosomal protein eS8 family. As to quaternary structure, component of the small ribosomal subunit. Identified in a IGF2BP1-dependent mRNP granule complex containing untranslated mRNAs. Part of the small subunit (SSU) processome, composed of more than 70 proteins and the RNA chaperone small nucleolar RNA (snoRNA) U3.

The protein localises to the cytoplasm. It localises to the membrane. It is found in the nucleus. Its subcellular location is the nucleolus. Functionally, component of the small ribosomal subunit. The ribosome is a large ribonucleoprotein complex responsible for the synthesis of proteins in the cell. Part of the small subunit (SSU) processome, first precursor of the small eukaryotic ribosomal subunit. During the assembly of the SSU processome in the nucleolus, many ribosome biogenesis factors, an RNA chaperone and ribosomal proteins associate with the nascent pre-rRNA and work in concert to generate RNA folding, modifications, rearrangements and cleavage as well as targeted degradation of pre-ribosomal RNA by the RNA exosome. This chain is Small ribosomal subunit protein eS8 (RpS8), found in Drosophila melanogaster (Fruit fly).